A 130-amino-acid chain; its full sequence is Large ribosomal subunit protein bL12 (130 aa).

It belongs to the bacterial ribosomal protein bL12 family. In terms of assembly, homodimer. Part of the ribosomal stalk of the 50S ribosomal subunit. Forms a multimeric L10(L12)X complex, where L10 forms an elongated spine to which 2 to 4 L12 dimers bind in a sequential fashion. Binds GTP-bound translation factors.

Its function is as follows. Forms part of the ribosomal stalk which helps the ribosome interact with GTP-bound translation factors. Is thus essential for accurate translation. This is Large ribosomal subunit protein bL12 from Chlamydia trachomatis serovar L2 (strain ATCC VR-902B / DSM 19102 / 434/Bu).